The chain runs to 141 residues: Large-conductance mechanosensitive channel (141 aa).

3 helical membrane passes run Val14–Leu34, Val38–Pro58, and Gly82–Ile102.

This sequence belongs to the MscL family. Homopentamer.

The protein resides in the cell inner membrane. Its function is as follows. Channel that opens in response to stretch forces in the membrane lipid bilayer. May participate in the regulation of osmotic pressure changes within the cell. The polypeptide is Large-conductance mechanosensitive channel (Methylorubrum extorquens (strain CM4 / NCIMB 13688) (Methylobacterium extorquens)).